We begin with the raw amino-acid sequence, 419 residues long: Esterase FrsA (419 aa).

The protein belongs to the FrsA family.

It carries out the reaction a carboxylic ester + H2O = an alcohol + a carboxylate + H(+). In terms of biological role, catalyzes the hydrolysis of esters. This is Esterase FrsA from Photobacterium profundum (strain SS9).